The sequence spans 432 residues: 3-phosphoshikimate 1-carboxyvinyltransferase (432 aa).

3 residues coordinate 3-phosphoshikimate: K21, S22, and R26. K21 contacts phosphoenolpyruvate. Residues G93 and R121 each coordinate phosphoenolpyruvate. Residues S166, Q168, D318, and K345 each contribute to the 3-phosphoshikimate site. Q168 is a binding site for phosphoenolpyruvate. The active-site Proton acceptor is D318. Phosphoenolpyruvate contacts are provided by R349 and R391.

The protein belongs to the EPSP synthase family. Monomer.

It is found in the cytoplasm. It catalyses the reaction 3-phosphoshikimate + phosphoenolpyruvate = 5-O-(1-carboxyvinyl)-3-phosphoshikimate + phosphate. The protein operates within metabolic intermediate biosynthesis; chorismate biosynthesis; chorismate from D-erythrose 4-phosphate and phosphoenolpyruvate: step 6/7. Functionally, catalyzes the transfer of the enolpyruvyl moiety of phosphoenolpyruvate (PEP) to the 5-hydroxyl of shikimate-3-phosphate (S3P) to produce enolpyruvyl shikimate-3-phosphate and inorganic phosphate. The chain is 3-phosphoshikimate 1-carboxyvinyltransferase from Persephonella marina (strain DSM 14350 / EX-H1).